The sequence spans 258 residues: uncharacterized protein (258 aa).

Residues 1–19 form the signal peptide; sequence MRKIFLPLLLVALSPVAHS.

This is an uncharacterized protein from Escherichia coli (strain K12).